The sequence spans 148 residues: Ribonuclease H (148 aa).

The RNase H type-1 domain occupies 2–143; the sequence is TADIIYIYSD…ADVLANQGVL (142 aa). Residues Asp-11, Glu-49, Asp-71, and Asp-135 each contribute to the Mg(2+) site.

This sequence belongs to the RNase H family. As to quaternary structure, monomer. Requires Mg(2+) as cofactor.

It is found in the cytoplasm. It catalyses the reaction Endonucleolytic cleavage to 5'-phosphomonoester.. Functionally, endonuclease that specifically degrades the RNA of RNA-DNA hybrids. This Thiobacillus denitrificans (strain ATCC 25259 / T1) protein is Ribonuclease H.